Here is a 254-residue protein sequence, read N- to C-terminus: MAVITMKSLLEAGVHFGHQVKRLDPRMKRFIFSERNEIHILDLQKTLQGIKDSYELVQSVIKSGKKVLFVGTKKQASEIIEQEAKRSDMPYVNNRWLGGMLSNFNTIKKSVQKLKKLEKMEIDGTFEMISKKEVSQLNREKLKLSKNLTGIKDMEELPGAVFIIDPKREQIVINEARKLGIPIISVVDTNCNPDVIDCPIPGNDDAIRSVALFTKIISDAILESDKEVGIQIVENLNEEDLMSEIEVKNEKKEL.

Belongs to the universal ribosomal protein uS2 family.

The chain is Small ribosomal subunit protein uS2 from Borrelia hermsii (strain HS1 / DAH).